The sequence spans 320 residues: rRNA 2'-O-methyltransferase fibrillarin 2 (320 aa).

The interval 1-79 is disordered; sequence MRPPLTGSGG…GRGGMKGGSK (79 aa). 2 stretches are compositionally biased toward gly residues: residues 7–44 and 57–76; these read GSGG…GGRG and PPRG…GMKG. S-adenosyl-L-methionine is bound by residues 167-168, 186-187, 211-212, and 231-234; these read TT, EF, DA, and DVAQ.

It belongs to the methyltransferase superfamily. Fibrillarin family. In terms of assembly, component of box C/D small nucleolar ribonucleoprotein (snoRNP) particles. Interacts with groundnut rosette virus long-distance movement protein; this interaction is required for virus long-distance movement protein transiting through host Cajal body and nucleolus, relocalization of fibrillarin to the cytoplasm, and in presence of viral RNA, leads to the formation of stable RNPs. Interacts (via GAR domain) with the hordeivirus TGB1 movement protein (via the first 82 amino acid residues). Interacts with PRMT11 and PRMT12. Interacts with MED19A. In terms of processing, methylated by PRMT11 and PRMT12. As to expression, expressed in roots and flowers. Expressed in leaves and stems. Expression levels decrease during aging.

The protein resides in the nucleus. The protein localises to the nucleolus. It catalyses the reaction a ribonucleotide in rRNA + S-adenosyl-L-methionine = a 2'-O-methylribonucleotide in rRNA + S-adenosyl-L-homocysteine + H(+). It carries out the reaction L-glutaminyl-[histone H2A] + S-adenosyl-L-methionine = N(5)-methyl-L-glutaminyl-[histone H2A] + S-adenosyl-L-homocysteine + H(+). S-adenosyl-L-methionine-dependent methyltransferase that has the ability to methylate both RNAs and proteins. Involved in pre-rRNA processing. Utilizes the methyl donor S-adenosyl-L-methionine to catalyze the site-specific 2'-hydroxyl methylation of ribose moieties in pre-ribosomal RNA. Site specificity is provided by a guide RNA that base pairs with the substrate. Methylation occurs at a characteristic distance from the sequence involved in base pairing with the guide RNA. Also acts as a protein methyltransferase by mediating methylation of 'Gln-105' of histone H2A (H2AQ105me), a modification that impairs binding of the FACT complex and is specifically present at 35S ribosomal DNA locus. Acts as a negative regulator of expression of immune responsive genes, including pathogenesis-related gene 1 (PR1), and of resistance against bacterial pathogen. Binds to MED19A, a positive regulator of PR1 expression, to repress the activator activity of MED19A. In response to the bacterial pathogen-associated molecular pattern (PAMP) elf18, associates with the long non-coding RNA (lncRNA) ELENA1 (At4g16355), and releases its repression of MED19A. Possesses ribonuclease activity toward rRNA in vitro. Binds phosphoinositides, phospholipids and phosphatidic acid in vitro. This chain is rRNA 2'-O-methyltransferase fibrillarin 2, found in Arabidopsis thaliana (Mouse-ear cress).